We begin with the raw amino-acid sequence, 396 residues long: Orotidine 5'-phosphate decarboxylase (396 aa).

Substrate is bound by residues D46, 68-70, 103-112, Y346, and R365; these read KTH and DRKFVDIGST. K105 acts as the Proton donor in catalysis.

Belongs to the OMP decarboxylase family.

It catalyses the reaction orotidine 5'-phosphate + H(+) = UMP + CO2. It participates in pyrimidine metabolism; UMP biosynthesis via de novo pathway; UMP from orotate: step 2/2. The chain is Orotidine 5'-phosphate decarboxylase (URA3) from Sordaria macrospora (strain ATCC MYA-333 / DSM 997 / K(L3346) / K-hell).